Consider the following 137-residue polypeptide: Crustacean calcium-binding protein 23 (137 aa).

EF-hand domains lie at 27 to 48, 62 to 97, and 100 to 135; these read RDSS…FGLD, EKKA…KVVK, and ATEE…YSGL.

As to quaternary structure, monomer or disulfide-linked dimers.

Its function is as follows. Possibly acts as a regulatory protein and not as a calcium buffer or transport protein. The protein is Crustacean calcium-binding protein 23 of Homarus americanus (American lobster).